The chain runs to 453 residues: Adenylyltransferase and sulfurtransferase MOCS3 (453 aa).

Thr62 is modified (phosphothreonine). ATP-binding positions include Gly101, Asp122, 129–133, Lys146, and 190–191; these read SNFHR and DN. Residues Cys231 and Cys234 each coordinate Zn(2+). Catalysis depends on Cys248, which acts as the Glycyl thioester intermediate; for adenylyltransferase activity. Cys306 and Cys309 together coordinate Zn(2+). The 97-residue stretch at 355–451 folds into the Rhodanese domain; the sequence is QAKPHLLIDV…WTSNIDPNFP (97 aa). The Cysteine persulfide intermediate; for sulfurtransferase activity role is filled by Cys410.

It in the N-terminal section; belongs to the HesA/MoeB/ThiF family. UBA4 subfamily. The cofactor is Zn(2+).

The protein resides in the cytoplasm. Its subcellular location is the cytosol. The catalysed reaction is [molybdopterin-synthase sulfur-carrier protein]-C-terminal Gly-Gly + ATP + H(+) = [molybdopterin-synthase sulfur-carrier protein]-C-terminal Gly-Gly-AMP + diphosphate. The enzyme catalyses [molybdopterin-synthase sulfur-carrier protein]-C-terminal Gly-Gly-AMP + S-sulfanyl-L-cysteinyl-[cysteine desulfurase] + AH2 = [molybdopterin-synthase sulfur-carrier protein]-C-terminal-Gly-aminoethanethioate + L-cysteinyl-[cysteine desulfurase] + A + AMP + 2 H(+). It participates in tRNA modification; 5-methoxycarbonylmethyl-2-thiouridine-tRNA biosynthesis. Its pathway is cofactor biosynthesis; molybdopterin biosynthesis. Plays a central role in 2-thiolation of mcm(5)S(2)U at tRNA wobble positions of cytosolic tRNA(Lys), tRNA(Glu) and tRNA(Gln). Also essential during biosynthesis of the molybdenum cofactor. Acts by mediating the C-terminal thiocarboxylation of sulfur carriers URM1 and MOCS2A. Its N-terminus first activates URM1 and MOCS2A as acyl-adenylates (-COAMP), then the persulfide sulfur on the catalytic cysteine is transferred to URM1 and MOCS2A to form thiocarboxylation (-COSH) of their C-terminus. The reaction probably involves hydrogen sulfide that is generated from the persulfide intermediate and that acts as a nucleophile towards URM1 and MOCS2A. Subsequently, a transient disulfide bond is formed. Does not use thiosulfate as sulfur donor; NFS1 probably acting as a sulfur donor for thiocarboxylation reactions. The sequence is that of Adenylyltransferase and sulfurtransferase MOCS3 from Drosophila sechellia (Fruit fly).